Reading from the N-terminus, the 231-residue chain is Ribonuclease 3 (231 aa).

In terms of domain architecture, RNase III spans 5-134 (QKKLKNDYGL…FLGALFIDQG (130 aa)). Mg(2+) is bound at residue glutamate 47. Aspartate 51 is a catalytic residue. Mg(2+)-binding residues include asparagine 120 and glutamate 123. Glutamate 123 is a catalytic residue. Residues 160–229 (DYKTELQEVL…AENAIKGQNH (70 aa)) enclose the DRBM domain.

The protein belongs to the ribonuclease III family. In terms of assembly, homodimer. It depends on Mg(2+) as a cofactor.

The protein localises to the cytoplasm. It catalyses the reaction Endonucleolytic cleavage to 5'-phosphomonoester.. Its function is as follows. Digests double-stranded RNA. Involved in the processing of primary rRNA transcript to yield the immediate precursors to the large and small rRNAs (23S and 16S). Processes some mRNAs, and tRNAs when they are encoded in the rRNA operon. Processes pre-crRNA and tracrRNA of type II CRISPR loci if present in the organism. In Lactococcus lactis subsp. cremoris (strain MG1363), this protein is Ribonuclease 3.